The chain runs to 533 residues: DNA primase large subunit (533 aa).

Residues cysteine 298, cysteine 377, cysteine 393, and cysteine 433 each contribute to the [4Fe-4S] cluster site. The segment at 466–492 (RQKRANGSAPPKARIRPDIKGHGDRSM) is disordered. Over residues 480 to 490 (IRPDIKGHGDR) the composition is skewed to basic and acidic residues.

The protein belongs to the eukaryotic-type primase large subunit family. As to quaternary structure, heterodimer of a catalytic subunit Prim1 and a regulatory subunit Prim2, also known as the DNA primase complex. Component of the alpha DNA polymerase complex (also known as the alpha DNA polymerase-primase complex) consisting of four subunits: the catalytic subunit PolA1, the regulatory subunit PolA2, and the primase complex subunits Prim1 and Prim2 respectively. PolA1 associates with the DNA primase complex before association with PolA2. The cofactor is [4Fe-4S] cluster. In terms of tissue distribution, expressed in embryos (at protein level).

Functionally, regulatory subunit of the DNA primase complex and component of the DNA polymerase alpha complex (also known as the alpha DNA polymerase-primase complex) which play an essential role in the initiation of DNA synthesis. During the S phase of the cell cycle, the DNA polymerase alpha complex (composed of a catalytic subunit PolA1, an accessory subunit PolA2 and two primase subunits, the catalytic subunit Prim1 and the regulatory subunit Prim2) is recruited to DNA at the replicative forks. The primase subunit of the polymerase alpha complex initiates DNA synthesis by oligomerising short RNA primers on both leading and lagging strands. These primers are initially extended by the polymerase alpha catalytic subunit and subsequently transferred to polymerase delta and polymerase epsilon for processive synthesis on the lagging and leading strand, respectively. In the primase complex, both subunits are necessary for the initial di-nucleotide formation, but the extension of the primer depends only on the catalytic subunit. Stabilizes and modulates the activity of the catalytic subunit. This is DNA primase large subunit from Drosophila melanogaster (Fruit fly).